A 520-amino-acid chain; its full sequence is CUGBP Elav-like family member 4 (520 aa).

RRM domains lie at 47-128 (IKLF…PADS), 135-215 (RKLF…FADT), and 435-513 (CNLF…LKRP).

The protein belongs to the CELF/BRUNOL family.

It is found in the nucleus. The protein resides in the cytoplasm. RNA-binding protein that may be implicated in the regulation of pre-mRNA alternative splicing. The chain is CUGBP Elav-like family member 4 (celf4) from Danio rerio (Zebrafish).